The chain runs to 235 residues: Small ribosomal subunit protein uS3 (235 aa).

The KH type-2 domain occupies 39-107; sequence IREILHKELK…DVVINIVEIR (69 aa). Residues 215–235 form a disordered region; that stretch reads QDKRMAEGDGGGSSRPRRDAA.

It belongs to the universal ribosomal protein uS3 family. In terms of assembly, part of the 30S ribosomal subunit. Forms a tight complex with proteins S10 and S14.

In terms of biological role, binds the lower part of the 30S subunit head. Binds mRNA in the 70S ribosome, positioning it for translation. This Rhodopseudomonas palustris (strain ATCC BAA-98 / CGA009) protein is Small ribosomal subunit protein uS3.